A 156-amino-acid polypeptide reads, in one-letter code: Ribosomal RNA large subunit methyltransferase H (156 aa).

Residues Leu73, Gly104, and 123 to 128 each bind S-adenosyl-L-methionine; that span reads IGPLTL.

The protein belongs to the RNA methyltransferase RlmH family. Homodimer.

It localises to the cytoplasm. The catalysed reaction is pseudouridine(1915) in 23S rRNA + S-adenosyl-L-methionine = N(3)-methylpseudouridine(1915) in 23S rRNA + S-adenosyl-L-homocysteine + H(+). Functionally, specifically methylates the pseudouridine at position 1915 (m3Psi1915) in 23S rRNA. The sequence is that of Ribosomal RNA large subunit methyltransferase H from Stenotrophomonas maltophilia (strain K279a).